We begin with the raw amino-acid sequence, 81 residues long: Short neurotoxin 1 (81 aa).

The N-terminal stretch at 1 to 21 (MKTLLLTLVVVTIVCLDLGYT) is a signal peptide. 4 disulfides stabilise this stretch: Cys-24-Cys-43, Cys-38-Cys-60, Cys-62-Cys-73, and Cys-74-Cys-79.

This sequence belongs to the three-finger toxin family. Short-chain subfamily. Type I alpha-neurotoxin sub-subfamily. Expressed by the venom gland.

It is found in the secreted. In terms of biological role, binds to muscle nicotinic acetylcholine receptor (nAChR) and inhibit acetylcholine from binding to the receptor, thereby impairing neuromuscular transmission. This chain is Short neurotoxin 1, found in Hoplocephalus stephensii (Stephens's banded snake).